A 505-amino-acid polypeptide reads, in one-letter code: L-amino-acid oxidase (505 aa).

A signal peptide spans 1–18 (MNVFLMFSLLFLAALGSC). Cys-28 and Cys-191 are oxidised to a cystine. Residues 61–62 (MS), 81–82 (EA), Arg-89, and 105–108 (GPMR) contribute to the FAD site. Arg-108 is a substrate binding site. The N-linked (GlcNAc...) asparagine glycan is linked to Asn-190. His-241 is a substrate binding site. Position 279 (Val-279) interacts with FAD. Cys-349 and Cys-430 are oxidised to a cystine. N-linked (GlcNAc...) asparagine glycosylation occurs at Asn-379. Tyr-390 contacts substrate. Residues Glu-475 and 482–487 (GWIDST) each bind FAD. Residue 482 to 483 (GW) coordinates substrate.

The protein belongs to the flavin monoamine oxidase family. FIG1 subfamily. As to quaternary structure, monomer. This is in contrast with most of its orthologs, that are non-covalently linked homodimers. The cofactor is FAD. In terms of processing, N-glycosylated. As to expression, expressed by the venom gland.

The protein resides in the secreted. The enzyme catalyses an L-alpha-amino acid + O2 + H2O = a 2-oxocarboxylate + H2O2 + NH4(+). It carries out the reaction L-leucine + O2 + H2O = 4-methyl-2-oxopentanoate + H2O2 + NH4(+). Functionally, catalyzes an oxidative deamination of predominantly hydrophobic and aromatic L-amino acids, thus producing hydrogen peroxide that may contribute to the diverse toxic effects of this enzyme. Shows activity on L-Leu. Exhibits diverse biological activities, such as hemorrhage, edema, antibacterial and antiparasitic activities, as well as regulation of platelet aggregation. Effects of snake L-amino oxidases on platelets are controversial, since they either induce aggregation or inhibit agonist-induced aggregation. These different effects are probably due to different experimental conditions. This protein has an ability to induce hemolysis and apoptosis. The chain is L-amino-acid oxidase from Protobothrops flavoviridis (Habu).